A 479-amino-acid polypeptide reads, in one-letter code: Glutamate--tRNA ligase (479 aa).

The 'HIGH' region signature appears at 9–19; that stretch reads PSPTGLFHIGT. The 'KMSKS' region motif lies at 248–252; the sequence is KLSKR. Lys251 lines the ATP pocket.

It belongs to the class-I aminoacyl-tRNA synthetase family. Glutamate--tRNA ligase type 1 subfamily. As to quaternary structure, monomer.

The protein localises to the cytoplasm. It catalyses the reaction tRNA(Glu) + L-glutamate + ATP = L-glutamyl-tRNA(Glu) + AMP + diphosphate. In terms of biological role, catalyzes the attachment of glutamate to tRNA(Glu) in a two-step reaction: glutamate is first activated by ATP to form Glu-AMP and then transferred to the acceptor end of tRNA(Glu). In Prochlorococcus marinus (strain MIT 9312), this protein is Glutamate--tRNA ligase.